The sequence spans 154 residues: Small ribosomal subunit protein uS13 (154 aa).

It belongs to the universal ribosomal protein uS13 family.

It localises to the cytoplasm. In terms of biological role, located at the top of the head of the 40S subunit, it contacts several helices of the 18S rRNA. This Dictyostelium discoideum (Social amoeba) protein is Small ribosomal subunit protein uS13 (rps18).